The primary structure comprises 146 residues: MNTVSVVQFLAVGCAVFVLYGRGVFAAEGVKKAGQHKDAELCLGSDGLGHRLDEFWYNDDMCQRFLCFKDDEGIMYEQIANCPIAIAEGDCTLKPGTKGHYPDCCPAVECPPEDQKKRKFKRKCFLVNILTTLLTKLVKNLKKNQQ.

A signal peptide spans 1–26 (MNTVSVVQFLAVGCAVFVLYGRGVFA).

The protein belongs to the scoloptoxin-16 family. In terms of processing, contains 4 disulfide bonds. In terms of tissue distribution, expressed by the venom gland.

It is found in the secreted. The polypeptide is U-scoloptoxin(16)-Er1a (Ethmostigmus rubripes (Giant centipede)).